Here is a 766-residue protein sequence, read N- to C-terminus: Serine/threonine-protein kinase PLK4 (766 aa).

The Protein kinase domain maps to 14 to 267 (YEVQHLLGKG…LEAVLCHPFM (254 aa)). ATP contacts are provided by residues 20 to 28 (LGKGGFAIV) and K43. D138 (proton acceptor) is an active-site residue. The Cryptic POLO box 1 (CPB1) domain maps to 379 to 496 (EDRISVPPLN…ARFVGLVKSK (118 aa)). Positions 497–600 (TPKVTYFSTL…GRRPVTDVQP (104 aa)) constitute a Cryptic POLO box 2 (CPB2) domain. Residues 658–737 (PIKRINVPDV…IPNIQIKLKT (80 aa)) form the POLO box domain.

It belongs to the protein kinase superfamily. Ser/Thr protein kinase family. CDC5/Polo subfamily. As to quaternary structure, homodimer. Post-translationally, ubiquitinated by the SCF(Slimb) ubiquitin ligase complex; leading to its degradation by the proteasome during interphase and regulating centriole number and ensuring the block to centriole reduplication.

The protein localises to the cytoplasm. It localises to the cytoskeleton. Its subcellular location is the microtubule organizing center. The protein resides in the centrosome. It is found in the centriole. It catalyses the reaction L-seryl-[protein] + ATP = O-phospho-L-seryl-[protein] + ADP + H(+). The catalysed reaction is L-threonyl-[protein] + ATP = O-phospho-L-threonyl-[protein] + ADP + H(+). In terms of biological role, serine/threonine-protein kinase that plays a central role in centriole duplication. Able to trigger procentriole formation on the surface of the mother centriole cylinder, using mother centriole as a platform, leading to the recruitment of centriole biogenesis proteins such as sas-6. When overexpressed, it is able to induce centrosome amplification through the simultaneous generation of multiple procentrioles adjoining each parental centriole during S phase. Centrosome amplification following overexpression can initiate tumorigenesis, highlighting the importance of centrosome regulation in cancers. This chain is Serine/threonine-protein kinase PLK4 (SAK), found in Drosophila yakuba (Fruit fly).